We begin with the raw amino-acid sequence, 416 residues long: Homogentisate 1,2-dioxygenase (416 aa).

Histidine 275 functions as the Proton acceptor in the catalytic mechanism. Residues histidine 318 and glutamate 324 each coordinate Fe cation. Positions 333 and 354 each coordinate homogentisate. Histidine 354 lines the Fe cation pocket.

It belongs to the homogentisate dioxygenase family. In terms of assembly, hexamer; dimer of trimers. Requires Fe cation as cofactor.

It catalyses the reaction homogentisate + O2 = 4-maleylacetoacetate + H(+). The protein operates within amino-acid degradation; L-phenylalanine degradation; acetoacetate and fumarate from L-phenylalanine: step 4/6. Functionally, involved in the catabolism of homogentisate (2,5-dihydroxyphenylacetate or 2,5-OH-PhAc), a central intermediate in the degradation of phenylalanine and tyrosine. Catalyzes the oxidative ring cleavage of the aromatic ring of homogentisate to yield maleylacetoacetate. The polypeptide is Homogentisate 1,2-dioxygenase (Legionella pneumophila subsp. pneumophila (strain Philadelphia 1 / ATCC 33152 / DSM 7513)).